Reading from the N-terminus, the 428-residue chain is 3-phosphoshikimate 1-carboxyvinyltransferase (428 aa).

The 3-phosphoshikimate site is built by Lys-23, Ser-24, and Arg-28. Residue Lys-23 coordinates phosphoenolpyruvate. Phosphoenolpyruvate is bound by residues Gly-97 and Arg-125. Positions 170, 171, 172, 198, 314, 337, and 341 each coordinate 3-phosphoshikimate. Residue Gln-172 participates in phosphoenolpyruvate binding. Asp-314 (proton acceptor) is an active-site residue. Arg-345, Arg-387, and Lys-412 together coordinate phosphoenolpyruvate.

This sequence belongs to the EPSP synthase family. Monomer.

The protein localises to the cytoplasm. It catalyses the reaction 3-phosphoshikimate + phosphoenolpyruvate = 5-O-(1-carboxyvinyl)-3-phosphoshikimate + phosphate. It participates in metabolic intermediate biosynthesis; chorismate biosynthesis; chorismate from D-erythrose 4-phosphate and phosphoenolpyruvate: step 6/7. Functionally, catalyzes the transfer of the enolpyruvyl moiety of phosphoenolpyruvate (PEP) to the 5-hydroxyl of shikimate-3-phosphate (S3P) to produce enolpyruvyl shikimate-3-phosphate and inorganic phosphate. The chain is 3-phosphoshikimate 1-carboxyvinyltransferase from Hamiltonella defensa subsp. Acyrthosiphon pisum (strain 5AT).